We begin with the raw amino-acid sequence, 1686 residues long: MGQDNSTPISLTLNHWRDVRTRAHNLSVEIKKGKWQTFCSSEWPTFGVGWPPEGTFNLSVIFAVKKIVFQENGGHPDQVPYIVVWQDLAQNPPPWVPASAKVAVVSDTRRPVAGRPSAPPRPPIYPATDDLLLLSEPTPPPYPAALPPPLAPQAIGPPSGQMPDSSDPEGPAAGTRSRRARSPADNSGPDSTVILPLRAIGPPAEPNGLVPLQYWPFSSADLYNWKSNHPSFSENPAGLTGLLESLMFSHQPTWDDCQQLLQILFTTEERERILLEARKNVLGDNGAPTQLENLINEAFPLNRPHWDYNTAAGRERLLVYRRTLVAGLKGAARRPTNLAKVREVLQGPAEPPSVFLERLMEAYRRYTPFDPSSEGQQAAVAMAFIGQSAPDIKKKLQRLEGLQDYSLQDLVKEAEKVYHKRETEEERQEREKKEAEEKERRRDRPKKKNLTKILAAVVSREGSTGRQTGNLSNQAKKTPRDGRPPLDKDQCAYCKEKGHWARECPRKKHVREAKVLALDNXGSQGSDPLPEPRVTLTVEGTPIEFLVDTGAEHSVLTQPMGKVGSRRTVVEGATGSKVYPWTTKRLLKIGHKQVTHSFLVIPECPAPLLGRDLLTKLKAQIQFSAEGPQVTWGERPTMCLVLNLEEEYRLHEKPVPSSIDPSWLQLFPTVWAERAGMGLANQVPPVVVELRSGASPVAVRQYPMSKEAREGIRPHIQKFLDLGVLVPCRSPWNTPLLPVKKPGTNDYRPVQDLREINKRVQDIHPTVPNPYNLLSSLPPSYTWYSVLDLKDAFFCLRLHPNSQPLFAFEWKDPEKGNTGQLTWTRLPQGFKNSPTLFDEALHRDLAPFRALNPQVVLLQYVDDLLVAAPTYEDCKKGTQKLLQELSKLGYRVSAKKAQLCQREVTYLGYLLKEGKRWLTPARKATVMKIPVPTTPRQVREFLGTAGFCRLWIPGFASLAAPLYPLTKESIPFIWTEEHQQAFDHIKKALLSAPALALPDLTKPFTLYIDERAGVARGVLTQTLGPWRRPVAYLSKKLDPVASGWPTCLKAVAAVALLLKDADKLTLGQNVTVIASHSLESIVRQPPDRWMTNARMTHYQSLLLNERVSFAPPAVLNPATLLPVESEATPVHRCSEILAEETGTRRDLEDQPLPGVPTWYTDGSSFITEGKRRAGAPIVDGKRTVWASSLPEGTSAQKAELVALTQALRLAEGKNINIYTDSRYAFATAHIHGAIYKQRGLLTSAGKDIKNKEEILALLEAIHLPRRVAIIHCPGHQRGSNPVATGNRRADEAAKQAALSTRVLAGTTKPQEPIEPAQEKTRPRELTPDRGKEFIKRLHQLTHLGPEKLLQLVNRTSLLIPNLQSAVREVTSQCQACAMTNAVTTYRETGKRQRGDRPGVYWEVDFTEIKPGRYGNKYLLVFIDTFSGWVEAFPTKTETALIVCKKILEEILPRFGIPKVLGSDNGPAFVAQVSQGLATQLGINWKLHCAYRPQSSGQVERMNRTIKETLTKLALETGGKDWVTLLPLALLRARNTPGRFGLTPYEILYGGPPPILESGETLGPDDRFLPVLFTHLKALEIVRTQIWDQIKEVYKPGTVTIPHPFQVGDQVLVRRHRPSSLEPRWKGPYLVLLTTPTAVKVDGIAAWVHASHLKPAPPSAPDESWELEKTDHPLKLRIRRRRDESAK.

Gly2 is lipidated: N-myristoyl glycine; by host. Disordered regions lie at residues 110 to 199 (RPVA…PLRA) and 419 to 486 (HKRE…RPPL). Positions 116 to 119 (PSAP) match the PTAP/PSAP motif motif. Positions 137–151 (PTPPPYPAALPPPLA) are enriched in pro residues. Residues 139–142 (PPPY) carry the PPXY motif motif. Positions 407-444 (LQDLVKEAEKVYHKRETEEERQEREKKEAEEKERRRDR) form a coiled coil. Over residues 419-442 (HKRETEEERQEREKKEAEEKERRR) the composition is skewed to basic and acidic residues. Positions 461–476 (EGSTGRQTGNLSNQAK) are enriched in polar residues. The CCHC-type zinc finger occupies 489–506 (DQCAYCKEKGHWARECPR). Residues 543–613 (IEFLVDTGAE…CPAPLLGRDL (71 aa)) form the Peptidase A2 domain. Asp548 (protease; shared with dimeric partner) is an active-site residue. In terms of domain architecture, Reverse transcriptase spans 720-911 (LDLGVLVPCR…REVTYLGYLL (192 aa)). Residues Asp788, Asp862, Asp863, Asp1161, Glu1199, Asp1220, and Asp1290 each coordinate Mg(2+). One can recognise an RNase H type-1 domain in the interval 1152–1298 (LPGVPTWYTD…ADEAAKQAAL (147 aa)). The tract at residues 1304-1325 (AGTTKPQEPIEPAQEKTRPREL) is disordered. Residues 1316 to 1325 (AQEKTRPREL) show a composition bias toward basic and acidic residues. The HHCC-type zinc finger occupies 1338 to 1376 (HQLTHLGPEKLLQLVNRTSLLIPNLQSAVREVTSQCQAC). The region spanning 1393-1551 (RGDRPGVYWE…TPYEILYGGP (159 aa)) is the Integrase catalytic domain. Residues Asp1404 and Asp1463 each coordinate Mg(2+).

Belongs to the retroviral Pol polyprotein family. Homohexamer; further associates as homomultimer. The virus core is composed of a lattice formed from hexagonal rings, each containing six capsid monomers. As to quaternary structure, interacts (via PPXY motif) with host NEDD4. Interacts (via PSAP motif) with host TSG101. In terms of assembly, the reverse transcriptase is a monomer (Potential). Interacts (via RNase domains) with host release factor ETF1; this interaction is essential for translational readthrough of amber codon between viral gag and pol genes, as well as for viral replication. Homodimer. It depends on Mg(2+) as a cofactor. Post-translationally, specific enzymatic cleavages by the viral protease yield mature proteins. The protease is released by autocatalytic cleavage. The polyprotein is cleaved during and after budding, this process is termed maturation. Phosphorylated on serine residues.

It is found in the virion. The protein localises to the host cell membrane. Its subcellular location is the host late endosome membrane. The protein resides in the host endosome. It localises to the host multivesicular body. It is found in the host cytoplasm. It catalyses the reaction DNA(n) + a 2'-deoxyribonucleoside 5'-triphosphate = DNA(n+1) + diphosphate. It carries out the reaction Endonucleolytic cleavage to 5'-phosphomonoester.. Its activity is regulated as follows. Most efficiently inhibited by Amprenavir, which is able to block Gag-Pol processing in infected cells. In terms of biological role, plays a role in budding and is processed by the viral protease during virion maturation outside the cell. During budding, it recruits, in a PPXY-dependent or independent manner, Nedd4-like ubiquitin ligases that conjugate ubiquitin molecules to Gag-Pol, or to Gag-Pol binding host factors. Interaction with HECT ubiquitin ligases probably links the viral protein to the host ESCRT pathway and facilitates release. Its function is as follows. Targets Gag and gag-pol polyproteins to the plasma membrane via a multipartite membrane binding signal, that includes its myristoylated N-terminus. Also mediates nuclear localization of the pre-integration complex. Functionally, constituent of the pre-integration complex (PIC) which tethers the latter to mitotic chromosomes. This allows the integration of the viral genome into the host DNA. Forms the spherical core of the virion that encapsulates the genomic RNA-nucleocapsid complex. In terms of biological role, involved in the packaging and encapsidation of two copies of the genome. Binds with high affinity to conserved UCUG elements within the packaging signal, located near the 5'-end of the genome. This binding is dependent on genome dimerization. Acts as a nucleic acid chaperone which is involved in rearrangement of nucleic acid secondary structures during gRNA retrotranscription. Its function is as follows. The aspartyl protease mediates proteolytic cleavages of Gag and Gag-Pol polyproteins during or shortly after the release of the virion from the plasma membrane. Cleavages take place as an ordered, step-wise cascade to yield mature proteins. This process is called maturation. Displays maximal activity during the budding process just prior to particle release from the cell. Functionally, RT is a multifunctional enzyme that converts the viral dimeric RNA genome into dsDNA in the cytoplasm, shortly after virus entry into the cell. This enzyme displays a DNA polymerase activity that can copy either DNA or RNA templates, and a ribonuclease H (RNase H) activity that cleaves the RNA strand of RNA-DNA heteroduplexes in a partially processive 3' to 5' endonucleasic mode. Conversion of viral genomic RNA into dsDNA requires many steps. A tRNA binds to the primer-binding site (PBS) situated at the 5' end of the viral RNA. RT uses the 3' end of the tRNA primer to perform a short round of RNA-dependent minus-strand DNA synthesis. The reading proceeds through the U5 region and ends after the repeated (R) region which is present at both ends of viral RNA. The portion of the RNA-DNA heteroduplex is digested by the RNase H, resulting in a ssDNA product attached to the tRNA primer. This ssDNA/tRNA hybridizes with the identical R region situated at the 3' end of viral RNA. This template exchange, known as minus-strand DNA strong stop transfer, can be either intra- or intermolecular. RT uses the 3' end of this newly synthesized short ssDNA to perform the RNA-dependent minus-strand DNA synthesis of the whole template. RNase H digests the RNA template except for a polypurine tract (PPT) situated at the 5' end of the genome. It is not clear if both polymerase and RNase H activities are simultaneous. RNase H probably can proceed both in a polymerase-dependent (RNA cut into small fragments by the same RT performing DNA synthesis) and a polymerase-independent mode (cleavage of remaining RNA fragments by free RTs). Secondly, RT performs DNA-directed plus-strand DNA synthesis using the PPT that has not been removed by RNase H as primers. PPT and tRNA primers are then removed by RNase H. The 3' and 5' ssDNA PBS regions hybridize to form a circular dsDNA intermediate. Strand displacement synthesis by RT to the PBS and PPT ends produces a blunt ended, linear dsDNA copy of the viral genome that includes long terminal repeats (LTRs) at both ends. Catalyzes viral DNA integration into the host chromosome, by performing a series of DNA cutting and joining reactions. This enzyme activity takes place after virion entry into a cell and reverse transcription of the RNA genome in dsDNA. The first step in the integration process is 3' processing. This step requires a complex comprising the viral genome, matrix protein and integrase. This complex is called the pre-integration complex (PIC). The integrase protein removes 2 nucleotides from each 3' end of the viral DNA, leaving recessed CA OH's at the 3' ends. In the second step that requires cell division, the PIC enters cell nucleus. In the third step, termed strand transfer, the integrase protein joins the previously processed 3' ends to the 5' ends of strands of target cellular DNA at the site of integration. The last step is viral DNA integration into host chromosome. The polypeptide is Gag-Pol polyprotein (pol) (Hylobatidae (gibbons)).